The sequence spans 469 residues: ATP synthase subunit beta (469 aa).

155–162 lines the ATP pocket; it reads GGAGCGKT.

It belongs to the ATPase alpha/beta chains family. F-type ATPases have 2 components, CF(1) - the catalytic core - and CF(0) - the membrane proton channel. CF(1) has five subunits: alpha(3), beta(3), gamma(1), delta(1), epsilon(1). CF(0) has three main subunits: a(1), b(2) and c(9-12). The alpha and beta chains form an alternating ring which encloses part of the gamma chain. CF(1) is attached to CF(0) by a central stalk formed by the gamma and epsilon chains, while a peripheral stalk is formed by the delta and b chains.

It localises to the cell inner membrane. The catalysed reaction is ATP + H2O + 4 H(+)(in) = ADP + phosphate + 5 H(+)(out). Produces ATP from ADP in the presence of a proton gradient across the membrane. The catalytic sites are hosted primarily by the beta subunits. This chain is ATP synthase subunit beta, found in Syntrophus aciditrophicus (strain SB).